The chain runs to 467 residues: Light-independent protochlorophyllide reductase subunit N (467 aa).

Residues Cys24, Cys49, and Cys109 each coordinate [4Fe-4S] cluster.

It belongs to the BchN/ChlN family. As to quaternary structure, protochlorophyllide reductase is composed of three subunits; ChlL, ChlN and ChlB. Forms a heterotetramer of two ChlB and two ChlN subunits. Requires [4Fe-4S] cluster as cofactor.

It carries out the reaction chlorophyllide a + oxidized 2[4Fe-4S]-[ferredoxin] + 2 ADP + 2 phosphate = protochlorophyllide a + reduced 2[4Fe-4S]-[ferredoxin] + 2 ATP + 2 H2O. It functions in the pathway porphyrin-containing compound metabolism; chlorophyll biosynthesis (light-independent). In terms of biological role, component of the dark-operative protochlorophyllide reductase (DPOR) that uses Mg-ATP and reduced ferredoxin to reduce ring D of protochlorophyllide (Pchlide) to form chlorophyllide a (Chlide). This reaction is light-independent. The NB-protein (ChlN-ChlB) is the catalytic component of the complex. The chain is Light-independent protochlorophyllide reductase subunit N from Leptolyngbya boryana (Plectonema boryanum).